Consider the following 204-residue polypeptide: VQ motif-containing protein 13 (204 aa).

Residues 1-12 are compositionally biased toward basic and acidic residues; sequence MEKSPRYRDKAK. The disordered stretch occupies residues 1–26; it reads MEKSPRYRDKAKNLLPSPSSCTTTPT. A compositionally biased stretch (low complexity) spans 16 to 26; that stretch reads PSPSSCTTTPT. Ser-17 bears the Phosphoserine mark. Residues 46–55 carry the VQ motif; the sequence is FKQVVQLLTG. The disordered stretch occupies residues 56–90; sequence IPKNPTHQPDPRFPPFHSIPPIKAVTNKKQSSSFR. Phosphoserine occurs at positions 73 and 128. Thr-131 is subject to Phosphothreonine. Positions 133–204 are disordered; the sequence is LMSDPFYRPG…HSPAPSPHDH (72 aa). Over residues 143 to 152 the composition is skewed to low complexity; it reads SFSQSPSDSK. 2 positions are modified to phosphoserine: Ser-147 and Ser-173. Phosphothreonine is present on residues Thr-177 and Thr-192. Residues Ser-196 and Ser-200 each carry the phosphoserine modification.

In terms of processing, phosphorylated on serine and threonine residues by MPK6.

It is found in the nucleus. Its function is as follows. May modulate WRKY transcription factor activities. The protein is VQ motif-containing protein 13 of Arabidopsis thaliana (Mouse-ear cress).